The following is a 286-amino-acid chain: MKLIIVSGRSGSGKSTALHVLEDMGYYCIDNLPIGLLSPLTQEVLDQGKTQNQQLAVSIDARNLYRDLSDFPSIYAALQAHNIDVEIIYLDANDATLIKRFHATRRKHPLSSKSTSLKEAIAKEKQLLEPIATLANLYIDTSDLSIYQLRDQVKIRVIGHKTQELALLFQSFGFKHGVPSDSDMVFDVRCLPNPYWDTALRGYKGTDQEIIEFLKQHPEPEQMLQHIISFLETWIPHFQNSNRTYMTISIGCTGGQHRSVYICERLGEHFKKKYDNVQVRHKELAQ.

8–15 (GRSGSGKS) is an ATP binding site. Position 60-63 (60-63 (DARN)) interacts with GTP.

Belongs to the RapZ-like family.

Its function is as follows. Displays ATPase and GTPase activities. In Hahella chejuensis (strain KCTC 2396), this protein is Nucleotide-binding protein HCH_05324.